Consider the following 246-residue polypeptide: Carboxymethylenebutenolidase homolog (246 aa).

Catalysis depends on residues Cys132, Asp179, and His212.

Belongs to the dienelactone hydrolase family.

It localises to the cytoplasm. It is found in the cytosol. Cysteine hydrolase. In Xenopus tropicalis (Western clawed frog), this protein is Carboxymethylenebutenolidase homolog (cmbl).